The primary structure comprises 519 residues: Keratin, type II cytoskeletal 1b (519 aa).

The head stretch occupies residues 1-166 (MSRQFSSQSA…DPEIQKIKTQ (166 aa)). Omega-N-methylarginine is present on residues Arg81 and Arg95. A coil 1A region spans residues 167 to 202 (EREQIKTLNNKFASFIDKVRFLEQQNQVLQTKWELL). Positions 167-480 (EREQIKTLNN…ELLEGEESRM (314 aa)) constitute an IF rod domain. A linker 1 region spans residues 203–221 (QQVNTSTRTSSLEPIFEEF). The tract at residues 222–313 (INQLQRQVDV…YLFDTELSQI (92 aa)) is coil 1B. Residues 314 to 337 (QTHVSDTNVILSMDNNRSLDLDSI) are linker 12. The segment at 338–476 (INAVRTQYEL…ATYRELLEGE (139 aa)) is coil 2. The segment at 477 to 519 (ESRMSGALQSQVSIWALPSNEGNDLGERLHDPQSQVPVPKLGC) is tail. A disordered region spans residues 499–519 (NDLGERLHDPQSQVPVPKLGC).

It belongs to the intermediate filament family. In terms of processing, undergoes deimination of some arginine residues (citrullination).

The sequence is that of Keratin, type II cytoskeletal 1b (Krt77) from Rattus norvegicus (Rat).